We begin with the raw amino-acid sequence, 154 residues long: Superoxide dismutase [Cu-Zn] (154 aa).

Residues His-47, His-49, and His-64 each coordinate Cu cation. The cysteines at positions 58 and 147 are disulfide-linked. Zn(2+) contacts are provided by His-64, His-72, His-81, and Asp-84. His-121 is a binding site for Cu cation. Residues 126 to 137 (DLGRGGNEESKK) are compositionally biased toward basic and acidic residues. The tract at residues 126-147 (DLGRGGNEESKKTGNAGPRPAC) is disordered.

It belongs to the Cu-Zn superoxide dismutase family. As to quaternary structure, homodimer. Cu cation is required as a cofactor. The cofactor is Zn(2+).

Its subcellular location is the cytoplasm. It catalyses the reaction 2 superoxide + 2 H(+) = H2O2 + O2. Its function is as follows. Destroys radicals which are normally produced within the cells and which are toxic to biological systems. Plays an important role in the phase transition, and may be important in vivo, as it would facilitate the intracellular survival of the fungus by providing a non-toxic environment in the macrophage phagolysosomes. The sequence is that of Superoxide dismutase [Cu-Zn] from Talaromyces marneffei (Penicillium marneffei).